The following is a 1012-amino-acid chain: DNA polymerase catalytic subunit (1012 aa).

This sequence belongs to the DNA polymerase type-B family.

It localises to the host nucleus. The enzyme catalyses DNA(n) + a 2'-deoxyribonucleoside 5'-triphosphate = DNA(n+1) + diphosphate. This Human herpesvirus 6A (strain Uganda-1102) (HHV-6 variant A) protein is DNA polymerase catalytic subunit (U38).